The chain runs to 181 residues: Nucleoside-triphosphatase THEP1 (181 aa).

ATP contacts are provided by residues 12–19 (GPVGSIKS) and 104–111 (VIVIDEIG).

The protein belongs to the THEP1 NTPase family.

It catalyses the reaction a ribonucleoside 5'-triphosphate + H2O = a ribonucleoside 5'-diphosphate + phosphate + H(+). In terms of biological role, has nucleotide phosphatase activity towards ATP, GTP, CTP, TTP and UTP. May hydrolyze nucleoside diphosphates with lower efficiency. This is Nucleoside-triphosphatase THEP1 from Thermoplasma acidophilum (strain ATCC 25905 / DSM 1728 / JCM 9062 / NBRC 15155 / AMRC-C165).